The chain runs to 273 residues: Large ribosomal subunit protein uL2 (273 aa).

Disordered stretches follow at residues 35–54 (DKKDKSGGRNNNGRITTRHI) and 222–273 (GMAM…RRNK). A compositionally biased stretch (basic and acidic residues) spans 229–239 (DHPHGGGEGRN). Positions 253 to 273 (KGFKTRKNKRTDKYIVRRRNK) are enriched in basic residues.

The protein belongs to the universal ribosomal protein uL2 family. As to quaternary structure, part of the 50S ribosomal subunit. Forms a bridge to the 30S subunit in the 70S ribosome.

Functionally, one of the primary rRNA binding proteins. Required for association of the 30S and 50S subunits to form the 70S ribosome, for tRNA binding and peptide bond formation. It has been suggested to have peptidyltransferase activity; this is somewhat controversial. Makes several contacts with the 16S rRNA in the 70S ribosome. The polypeptide is Large ribosomal subunit protein uL2 (Aeromonas hydrophila subsp. hydrophila (strain ATCC 7966 / DSM 30187 / BCRC 13018 / CCUG 14551 / JCM 1027 / KCTC 2358 / NCIMB 9240 / NCTC 8049)).